A 262-amino-acid polypeptide reads, in one-letter code: Hydroxyethylthiazole kinase (262 aa).

Met-50 is a substrate binding site. Residues Arg-125 and Thr-171 each coordinate ATP. Gly-198 provides a ligand contact to substrate.

Belongs to the Thz kinase family. Mg(2+) serves as cofactor.

The enzyme catalyses 5-(2-hydroxyethyl)-4-methylthiazole + ATP = 4-methyl-5-(2-phosphooxyethyl)-thiazole + ADP + H(+). Its pathway is cofactor biosynthesis; thiamine diphosphate biosynthesis; 4-methyl-5-(2-phosphoethyl)-thiazole from 5-(2-hydroxyethyl)-4-methylthiazole: step 1/1. Functionally, catalyzes the phosphorylation of the hydroxyl group of 4-methyl-5-beta-hydroxyethylthiazole (THZ). The chain is Hydroxyethylthiazole kinase from Escherichia fergusonii (strain ATCC 35469 / DSM 13698 / CCUG 18766 / IAM 14443 / JCM 21226 / LMG 7866 / NBRC 102419 / NCTC 12128 / CDC 0568-73).